The primary structure comprises 46 residues: Phoratoxin (46 aa).

Disulfide bonds link Cys-3-Cys-40, Cys-4-Cys-32, and Cys-16-Cys-26. His-46 is subject to Blocked carboxyl end (His).

Belongs to the plant thionin (TC 1.C.44) family.

The protein resides in the secreted. In terms of biological role, thionins are small plant proteins which are toxic to animal cells. They seem to exert their toxic effect at the level of the cell membrane. Their precise function is not known. The sequence is that of Phoratoxin from Phoradendron leucarpum subsp. tomentosum (California mistletoe).